We begin with the raw amino-acid sequence, 306 residues long: MLNYVLKRLLGLIPTLLIVAVLVFLFVHLLPGDPARLIAGPEADAQVIALVRQQLGLDQPLHVQFWRYITHVLQGDFGTSMVSRRPVSEEIASRFLPTLWLTITSMIWAVLFGMAIGIAAAVWRNRWPDRLGMTLAVTGISFPAFALGMLLMQIFSVDLGWLPTVGADSWQHYILPSLTLGAAVASVMARFTRSSFVDVLSEDYMRTARAKGVSETWVVLKHGLRNAMIPVVTMMGLQFGFLLGGSIVVEKVFNWPGLGRLLVDSVDMRDYPVIQAEVLLFSLEFILINLVVDVLYAAINPAIRYK.

The Cytoplasmic segment spans residues 1–8 (MLNYVLKR). A helical transmembrane segment spans residues 9 to 29 (LLGLIPTLLIVAVLVFLFVHL). Over 30–102 (LPGDPARLIA…SRFLPTLWLT (73 aa)) the chain is Periplasmic. The ABC transmembrane type-1 domain occupies 95–292 (FLPTLWLTIT…LEFILINLVV (198 aa)). The helical transmembrane segment at 103-123 (ITSMIWAVLFGMAIGIAAAVW) threads the bilayer. Topologically, residues 124-134 (RNRWPDRLGMT) are cytoplasmic. The helical transmembrane segment at 135 to 155 (LAVTGISFPAFALGMLLMQIF) threads the bilayer. At 156 to 168 (SVDLGWLPTVGAD) the chain is on the periplasmic side. The chain crosses the membrane as a helical span at residues 169-189 (SWQHYILPSLTLGAAVASVMA). The Cytoplasmic segment spans residues 190–228 (RFTRSSFVDVLSEDYMRTARAKGVSETWVVLKHGLRNAM). A helical transmembrane segment spans residues 229–249 (IPVVTMMGLQFGFLLGGSIVV). The Periplasmic portion of the chain corresponds to 250-278 (EKVFNWPGLGRLLVDSVDMRDYPVIQAEV). Residues 279–299 (LLFSLEFILINLVVDVLYAAI) traverse the membrane as a helical segment. Over 300 to 306 (NPAIRYK) the chain is Cytoplasmic.

Belongs to the binding-protein-dependent transport system permease family. As to quaternary structure, the complex is composed of two ATP-binding proteins (GsiA), two transmembrane proteins (GsiC and GsiD) and a solute-binding protein (GsiB).

It localises to the cell inner membrane. Its function is as follows. Part of the ABC transporter complex GsiABCD involved in glutathione import. Probably responsible for the translocation of the substrate across the membrane. The polypeptide is Glutathione transport system permease protein GsiC (Salmonella paratyphi A (strain ATCC 9150 / SARB42)).